A 583-amino-acid polypeptide reads, in one-letter code: 2-succinyl-5-enolpyruvyl-6-hydroxy-3-cyclohexene-1-carboxylate synthase (583 aa).

It belongs to the TPP enzyme family. MenD subfamily. In terms of assembly, homodimer. Mg(2+) is required as a cofactor. The cofactor is Mn(2+). Requires thiamine diphosphate as cofactor.

The catalysed reaction is isochorismate + 2-oxoglutarate + H(+) = 5-enolpyruvoyl-6-hydroxy-2-succinyl-cyclohex-3-ene-1-carboxylate + CO2. It participates in quinol/quinone metabolism; 1,4-dihydroxy-2-naphthoate biosynthesis; 1,4-dihydroxy-2-naphthoate from chorismate: step 2/7. It functions in the pathway quinol/quinone metabolism; menaquinone biosynthesis. In terms of biological role, catalyzes the thiamine diphosphate-dependent decarboxylation of 2-oxoglutarate and the subsequent addition of the resulting succinic semialdehyde-thiamine pyrophosphate anion to isochorismate to yield 2-succinyl-5-enolpyruvyl-6-hydroxy-3-cyclohexene-1-carboxylate (SEPHCHC). The protein is 2-succinyl-5-enolpyruvyl-6-hydroxy-3-cyclohexene-1-carboxylate synthase of Chlorobium limicola (strain DSM 245 / NBRC 103803 / 6330).